The following is a 265-amino-acid chain: 3-methyl-2-oxobutanoate hydroxymethyltransferase (265 aa).

Residues aspartate 45 and aspartate 84 each coordinate Mg(2+). 3-methyl-2-oxobutanoate is bound by residues 45-46 (DS), aspartate 84, and lysine 112. A Mg(2+)-binding site is contributed by glutamate 114. Glutamate 181 (proton acceptor) is an active-site residue.

It belongs to the PanB family. Homodecamer; pentamer of dimers. The cofactor is Mg(2+).

The protein localises to the cytoplasm. It catalyses the reaction 3-methyl-2-oxobutanoate + (6R)-5,10-methylene-5,6,7,8-tetrahydrofolate + H2O = 2-dehydropantoate + (6S)-5,6,7,8-tetrahydrofolate. The protein operates within cofactor biosynthesis; (R)-pantothenate biosynthesis; (R)-pantoate from 3-methyl-2-oxobutanoate: step 1/2. Functionally, catalyzes the reversible reaction in which hydroxymethyl group from 5,10-methylenetetrahydrofolate is transferred onto alpha-ketoisovalerate to form ketopantoate. The chain is 3-methyl-2-oxobutanoate hydroxymethyltransferase from Pseudoalteromonas atlantica (strain T6c / ATCC BAA-1087).